We begin with the raw amino-acid sequence, 170 residues long: Transcription factor E (170 aa).

An HTH TFE/IIEalpha-type domain is found at 1 to 93 (MKEAYLYIVE…TWYVDDEIIR (93 aa)).

Belongs to the TFE family. In terms of assembly, monomer. Interaction with RNA polymerase subunits RpoF and RpoE is necessary for Tfe stimulatory transcription activity. Able to interact with Tbp and RNA polymerase in the absence of DNA promoter. Interacts both with the preinitiation and elongation complexes.

Its function is as follows. Transcription factor that plays a role in the activation of archaeal genes transcribed by RNA polymerase. Facilitates transcription initiation by enhancing TATA-box recognition by TATA-box-binding protein (Tbp), and transcription factor B (Tfb) and RNA polymerase recruitment. Not absolutely required for transcription in vitro, but particularly important in cases where Tbp or Tfb function is not optimal. It dynamically alters the nucleic acid-binding properties of RNA polymerases by stabilizing the initiation complex and destabilizing elongation complexes. Seems to translocate with the RNA polymerase following initiation and acts by binding to the non template strand of the transcription bubble in elongation complexes. The protein is Transcription factor E of Pyrobaculum islandicum (strain DSM 4184 / JCM 9189 / GEO3).